A 136-amino-acid polypeptide reads, in one-letter code: Large ribosomal subunit protein uL16 (136 aa).

The protein belongs to the universal ribosomal protein uL16 family. As to quaternary structure, part of the 50S ribosomal subunit.

Binds 23S rRNA and is also seen to make contacts with the A and possibly P site tRNAs. The chain is Large ribosomal subunit protein uL16 from Karelsulcia muelleri (strain GWSS) (Sulcia muelleri).